Reading from the N-terminus, the 194-residue chain is Fe/S biogenesis protein NfuA (194 aa).

The [4Fe-4S] cluster site is built by Cys-151 and Cys-154.

This sequence belongs to the NfuA family. In terms of assembly, homodimer. It depends on [4Fe-4S] cluster as a cofactor.

In terms of biological role, involved in iron-sulfur cluster biogenesis. Binds a 4Fe-4S cluster, can transfer this cluster to apoproteins, and thereby intervenes in the maturation of Fe/S proteins. Could also act as a scaffold/chaperone for damaged Fe/S proteins. This is Fe/S biogenesis protein NfuA from Mannheimia succiniciproducens (strain KCTC 0769BP / MBEL55E).